A 100-amino-acid chain; its full sequence is EKC/KEOPS complex subunit GON7 (100 aa).

M1 bears the N-acetylmethionine mark. The interval 50 to 100 (SPVQGEAQDRVAAAPEEALDGDDEDDAEDENNIDNRTNSDGPTAKRPKPPS) is disordered. The segment covering 66–81 (EALDGDDEDDAEDENN) has biased composition (acidic residues).

In terms of assembly, component of the EKC/KEOPS complex composed of at least GON7, TP53RK, TPRKB, OSGEP and LAGE3; the whole complex dimerizes.

The protein resides in the nucleus. In terms of biological role, component of the EKC/KEOPS complex that is required for the formation of a threonylcarbamoyl group on adenosine at position 37 (t(6)A37) in tRNAs that read codons beginning with adenine. The complex is probably involved in the transfer of the threonylcarbamoyl moiety of threonylcarbamoyl-AMP (TC-AMP) to the N6 group of A37. GON7 plays a supporting role to the catalytic subunit OSGEP in the complex. The chain is EKC/KEOPS complex subunit GON7 from Sus scrofa (Pig).